The following is a 273-amino-acid chain: Polyamine aminopropyltransferase (273 aa).

In terms of domain architecture, PABS spans 5-238 (ENWFSERYSD…GFWSFTIASE (234 aa)). Residue Gln34 participates in S-methyl-5'-thioadenosine binding. 2 residues coordinate spermidine: His65 and Asp90. Residues Glu109 and 140 to 141 (DG) each bind S-methyl-5'-thioadenosine. Catalysis depends on Asp158, which acts as the Proton acceptor. 158–161 (DSTD) serves as a coordination point for spermidine. Pro165 provides a ligand contact to S-methyl-5'-thioadenosine.

This sequence belongs to the spermidine/spermine synthase family. As to quaternary structure, homodimer or homotetramer.

The protein resides in the cytoplasm. The catalysed reaction is S-adenosyl 3-(methylsulfanyl)propylamine + putrescine = S-methyl-5'-thioadenosine + spermidine + H(+). Its pathway is amine and polyamine biosynthesis; spermidine biosynthesis; spermidine from putrescine: step 1/1. In terms of biological role, catalyzes the irreversible transfer of a propylamine group from the amino donor S-adenosylmethioninamine (decarboxy-AdoMet) to putrescine (1,4-diaminobutane) to yield spermidine. The protein is Polyamine aminopropyltransferase of Thermoplasma volcanium (strain ATCC 51530 / DSM 4299 / JCM 9571 / NBRC 15438 / GSS1).